We begin with the raw amino-acid sequence, 151 residues long: 3-dehydroquinate dehydratase (151 aa).

Y24 functions as the Proton acceptor in the catalytic mechanism. The substrate site is built by N76, H82, and D89. Residue H102 is the Proton donor of the active site. Substrate is bound by residues 103-104 and R113; that span reads LS.

The protein belongs to the type-II 3-dehydroquinase family. Homododecamer.

It catalyses the reaction 3-dehydroquinate = 3-dehydroshikimate + H2O. It participates in metabolic intermediate biosynthesis; chorismate biosynthesis; chorismate from D-erythrose 4-phosphate and phosphoenolpyruvate: step 3/7. Functionally, catalyzes a trans-dehydration via an enolate intermediate. In Acinetobacter baumannii (strain AB307-0294), this protein is 3-dehydroquinate dehydratase.